Consider the following 335-residue polypeptide: Protease HtpX homolog (335 aa).

The next 3 helical transmembrane spans lie at 9–29 (VYMMLAVLGYFVMLLLASTIA), 42–62 (LFTSMVLLAGMILAISAAIIY), and 64–84 (ILAYAGVYISFYGLIIFLLII). His168 contacts Zn(2+). Residue Glu169 is part of the active site. His172 is a Zn(2+) binding site. 2 helical membrane-spanning segments follow: residues 179-199 (AVMLLFGLLPSVIFYLGYALL) and 213-233 (AAIGIAAVIVSFIVQILVLAF). Zn(2+) is bound at residue Glu238.

This sequence belongs to the peptidase M48B family. Requires Zn(2+) as cofactor.

It is found in the cell membrane. In Archaeoglobus fulgidus (strain ATCC 49558 / DSM 4304 / JCM 9628 / NBRC 100126 / VC-16), this protein is Protease HtpX homolog.